The chain runs to 1288 residues: (E3-independent) E2 ubiquitin-conjugating enzyme UBE2O (1288 aa).

Low complexity-rich tracts occupy residues methionine 1–alanine 26 and alanine 34–proline 47. Disordered stretches follow at residues methionine 1 to serine 51 and glutamate 80 to alanine 109. Serine 45, serine 82, serine 84, and serine 394 each carry phosphoserine. 2 disordered regions span residues threonine 396 to valine 529 and glutamate 711 to valine 743. Residues cysteine 401–alanine 418 show a composition bias toward basic and acidic residues. The residue at position 436 (serine 436) is a Phosphoserine. Positions methionine 440–glutamate 450 are enriched in acidic residues. The segment covering glutamate 462–glutamate 472 has biased composition (basic and acidic residues). The span at glutamine 473–aspartate 485 shows a compositional bias: acidic residues. Phosphothreonine occurs at positions 483 and 486. Over residues threonine 486–glycine 502 the composition is skewed to low complexity. Serine 510 carries the phosphoserine modification. Positions asparagine 517–lysine 528 are enriched in basic residues. A compositionally biased stretch (low complexity) spans valine 717–serine 726. Over residues aspartate 727 to glutamate 737 the composition is skewed to acidic residues. Positions arginine 809–valine 879 form a coiled coil. Serine 833 carries the post-translational modification Phosphoserine. Phosphothreonine is present on threonine 835. Serine 836 is modified (phosphoserine). The segment covering glutamate 872 to glutamate 890 has biased composition (basic and acidic residues). Positions glutamate 872–tryptophan 899 are disordered. Serine 893 is modified (phosphoserine). One can recognise a UBC core domain in the interval lysine 950 to threonine 1110. Catalysis depends on cysteine 1037, which acts as the Glycyl thioester intermediate. Residues glycine 1158–tyrosine 1247 are disordered.

Belongs to the ubiquitin-conjugating enzyme family. Interacts with CPNE1 (via VWFA domain) and CPNE4 (via VWFA domain). Interacts with UBR2. Post-translationally, phosphorylated. Phosphorylation affects subcellular location. In terms of processing, ubiquitinated: autoubiquitinates, possibly affecting its subcellular location. In terms of tissue distribution, highly expressed in reticulocytes.

The protein localises to the cytoplasm. The protein resides in the nucleus. It catalyses the reaction S-ubiquitinyl-[E1 ubiquitin-activating enzyme]-L-cysteine + [acceptor protein]-L-lysine = [E1 ubiquitin-activating enzyme]-L-cysteine + N(6)-monoubiquitinyl-[acceptor protein]-L-lysine.. It participates in protein modification; protein ubiquitination. Inhibited by inorganic arsenite such as phenylarsenoxides. In terms of biological role, E2/E3 hybrid ubiquitin-protein ligase that displays both E2 and E3 ligase activities and mediates monoubiquitination of target proteins. Negatively regulates TRAF6-mediated NF-kappa-B activation independently of its E2 activity. Acts as a positive regulator of BMP7 signaling by mediating monoubiquitination of SMAD6, thereby regulating adipogenesis. Mediates monoubiquitination at different sites of the nuclear localization signal (NLS) of BAP1, leading to cytoplasmic retention of BAP1. Also able to monoubiquitinate the NLS of other chromatin-associated proteins, such as INO80 and CXXC1, affecting their subcellular location. Acts as a regulator of retrograde transport by assisting the TRIM27:MAGEL2 E3 ubiquitin ligase complex to mediate 'Lys-63'-linked ubiquitination of WASHC1, leading to promote endosomal F-actin assembly. This Mus musculus (Mouse) protein is (E3-independent) E2 ubiquitin-conjugating enzyme UBE2O (Ube2o).